We begin with the raw amino-acid sequence, 510 residues long: Maturase K (510 aa).

The protein belongs to the intron maturase 2 family. MatK subfamily.

The protein resides in the plastid. The protein localises to the chloroplast. Functionally, usually encoded in the trnK tRNA gene intron. Probably assists in splicing its own and other chloroplast group II introns. The protein is Maturase K of Populus nigra (Lombardy poplar).